We begin with the raw amino-acid sequence, 223 residues long: Expansin-B6 (223 aa).

The region spanning 16-124 (GGACGFAVAN…RRVECLYRRT (109 aa)) is the Expansin-like EG45 domain. 3 disulfides stabilise this stretch: Cys19-Cys46, Cys49-Cys119, and Cys54-Cys60. Residues 137-218 (YYISFVVEYE…NWKPNETYRS (82 aa)) form the Expansin-like CBD domain. A glycan (N-linked (GlcNAc...) asparagine) is linked at Asn213.

This sequence belongs to the expansin family. Expansin B subfamily.

It is found in the secreted. Its subcellular location is the cell wall. The protein localises to the membrane. In terms of biological role, may cause loosening and extension of plant cell walls by disrupting non-covalent bonding between cellulose microfibrils and matrix glucans. In Arabidopsis thaliana (Mouse-ear cress), this protein is Expansin-B6.